Here is a 145-residue protein sequence, read N- to C-terminus: Oocyte zinc finger protein XlCOF8.4I (145 aa).

A disordered region spans residues 1-25; it reads HKREADFCSKGNLTNPEISPVEHYP. The C2H2-type zinc-finger motif lies at 123–145; it reads LSCSECGKCFSTYHVLARHQKTH.

This sequence belongs to the krueppel C2H2-type zinc-finger protein family.

It localises to the nucleus. Its function is as follows. May be involved in transcriptional regulation. This is Oocyte zinc finger protein XlCOF8.4I from Xenopus laevis (African clawed frog).